The following is a 147-amino-acid chain: Large ribosomal subunit protein uL15 (147 aa).

The interval 1-57 (MKLHELKSAPKSRNHKAKVVGRGHGSGLGKTSGRGQKGQKARKSGRTRPGFEGGQTP) is disordered. Positions 10 to 21 (PKSRNHKAKVVG) are enriched in basic residues. The segment covering 22-36 (RGHGSGLGKTSGRGQ) has biased composition (gly residues). Basic residues predominate over residues 37 to 46 (KGQKARKSGR).

It belongs to the universal ribosomal protein uL15 family. As to quaternary structure, part of the 50S ribosomal subunit.

Its function is as follows. Binds to the 23S rRNA. This Mycoplasmoides gallisepticum (strain R(low / passage 15 / clone 2)) (Mycoplasma gallisepticum) protein is Large ribosomal subunit protein uL15.